A 689-amino-acid polypeptide reads, in one-letter code: ATP-dependent zinc metalloprotease FtsH 2 (689 aa).

The Cytoplasmic portion of the chain corresponds to 1 to 3 (MRK). A helical membrane pass occupies residues 4 to 24 (FFRGASFYILAFIIILFIVQN). The Extracellular portion of the chain corresponds to 25-111 (FGRPTQEIDE…SAAPPPTTPW (87 aa)). Residues 112–132 (FIELLPSIFMVLIFIVFWFVF) form a helical membrane-spanning segment. Residues 133-689 (MQQSQGGGNR…QDNEENRKEE (557 aa)) are Cytoplasmic-facing. 205–212 (GPPGTGKT) lines the ATP pocket. Histidine 427 provides a ligand contact to Zn(2+). Glutamate 428 is a catalytic residue. 2 residues coordinate Zn(2+): histidine 431 and aspartate 503. A compositionally biased stretch (basic and acidic residues) spans 661–673 (EELIEVSSDKEEE). Residues 661 to 689 (EELIEVSSDKEEEKDNQDDQDNEENRKEE) form a disordered region.

This sequence in the central section; belongs to the AAA ATPase family. It in the C-terminal section; belongs to the peptidase M41 family. Homohexamer. Zn(2+) is required as a cofactor.

The protein resides in the cell membrane. Functionally, acts as a processive, ATP-dependent zinc metallopeptidase for both cytoplasmic and membrane proteins. Plays a role in the quality control of integral membrane proteins. In Alkaliphilus metalliredigens (strain QYMF), this protein is ATP-dependent zinc metalloprotease FtsH 2.